A 273-amino-acid polypeptide reads, in one-letter code: METWSKLLDGTTPSRRWRKLVLLLPPLLLFLLQTEALQGLESDDRFRTRENECHFYAGGQVYPGEVSRVSVADHSLHLSKAKISKPAPYWEGTAVINGEFKELKLTDYRGKYLVFFFYPLDFTFVCPTEIIAFGDRIEEFKSINTEVVACSVDSQFTHLAWINTPRRQGGLGPIRIPLLSDLNHQISKDYGVYLEDSGHTLRGLFIIDDKGVLRQITLNDLPVGRSVDETLRLVQAFQYTDKHGEVCPAGWKPGSETIIPDPAGKLKYFDKLN.

A signal peptide spans 1-40; it reads METWSKLLDGTTPSRRWRKLVLLLPPLLLFLLQTEALQGL. The region spanning 81 to 239 is the Thioredoxin domain; the sequence is AKISKPAPYW…TLRLVQAFQY (159 aa). Cys-126 (cysteine sulfenic acid (-SOH) intermediate) is an active-site residue.

It belongs to the peroxiredoxin family. AhpC/Prx1 subfamily. Homodimer; disulfide-linked, upon oxidation. 5 homodimers assemble to form a ring-like decamer. Post-translationally, the enzyme can be inactivated by further oxidation of the cysteine sulfenic acid (C(P)-SOH) to sulphinic acid (C(P)-SO2H) and sulphonic acid (C(P)-SO3H) instead of its condensation to a disulfide bond.

Its subcellular location is the cytoplasm. It is found in the endoplasmic reticulum. It localises to the secreted. The catalysed reaction is a hydroperoxide + [thioredoxin]-dithiol = an alcohol + [thioredoxin]-disulfide + H2O. Its function is as follows. Thiol-specific peroxidase that catalyzes the reduction of hydrogen peroxide and organic hydroperoxides to water and alcohols, respectively. Plays a role in cell protection against oxidative stress by detoxifying peroxides and as sensor of hydrogen peroxide-mediated signaling events. Regulates the activation of NF-kappa-B in the cytosol by a modulation of I-kappa-B-alpha phosphorylation. The chain is Peroxiredoxin-4 (Prdx4) from Rattus norvegicus (Rat).